A 524-amino-acid chain; its full sequence is Probable pectinesterase/pectinesterase inhibitor 19 (524 aa).

The N-terminal stretch at 1-22 (MLVKVFSFFILMITMVVIGVSK) is a signal peptide. The interval 23-172 (EYCDDKQSCQ…ISRARIALAL (150 aa)) is pectinesterase inhibitor 19. The pectinesterase 19 stretch occupies residues 215 to 510 (DVVVAKDGTG…FTVAKLLDGE (296 aa)). 2 N-linked (GlcNAc...) asparagine glycosylation sites follow: Asn265 and Asn281. Thr290 contacts substrate. The active-site Proton donor; for pectinesterase activity is Asp343. Cysteines 357 and 377 form a disulfide. The active-site Nucleophile; for pectinesterase activity is Asp364. N-linked (GlcNAc...) asparagine glycosylation occurs at Asn412. Substrate-binding residues include Arg430 and Trp432.

It in the N-terminal section; belongs to the PMEI family. In the C-terminal section; belongs to the pectinesterase family. In terms of tissue distribution, expressed in siliques, but not in flower buds.

The protein resides in the secreted. The protein localises to the cell wall. It carries out the reaction [(1-&gt;4)-alpha-D-galacturonosyl methyl ester](n) + n H2O = [(1-&gt;4)-alpha-D-galacturonosyl](n) + n methanol + n H(+). It functions in the pathway glycan metabolism; pectin degradation; 2-dehydro-3-deoxy-D-gluconate from pectin: step 1/5. In terms of biological role, acts in the modification of cell walls via demethylesterification of cell wall pectin. The polypeptide is Probable pectinesterase/pectinesterase inhibitor 19 (PME19) (Arabidopsis thaliana (Mouse-ear cress)).